The primary structure comprises 310 residues: UDP-N-acetylenolpyruvoylglucosamine reductase (310 aa).

The FAD-binding PCMH-type domain maps to 34–211; it reads TGGPAQCVYV…REDMGKIAQE (178 aa). R177 is an active-site residue. S225 functions as the Proton donor in the catalytic mechanism. E295 is a catalytic residue.

This sequence belongs to the MurB family. The cofactor is FAD.

Its subcellular location is the cytoplasm. It carries out the reaction UDP-N-acetyl-alpha-D-muramate + NADP(+) = UDP-N-acetyl-3-O-(1-carboxyvinyl)-alpha-D-glucosamine + NADPH + H(+). It functions in the pathway cell wall biogenesis; peptidoglycan biosynthesis. In terms of biological role, cell wall formation. The protein is UDP-N-acetylenolpyruvoylglucosamine reductase of Beijerinckia indica subsp. indica (strain ATCC 9039 / DSM 1715 / NCIMB 8712).